The sequence spans 545 residues: Calcium-dependent protein kinase 10 (545 aa).

The interval 1 to 36 (MGNCNACVRPDSKESKPSSKPKKPNRDRKLNPFAGD) is disordered. Glycine 2 is lipidated: N-myristoyl glycine. One can recognise a Protein kinase domain in the interval 63 to 321 (YILGRELGRG…AQQVLAHPWI (259 aa)). ATP-binding positions include 69 to 77 (LGRGEFGIT) and lysine 92. Aspartate 187 (proton acceptor) is an active-site residue. Phosphoserine is present on serine 227. Positions 327–357 (APNVPLGDIVRSRLKQFSMMNRFKKKVLRVI) are autoinhibitory domain. EF-hand domains follow at residues 364-399 (QEVE…VGSQ), 400-435 (LGEP…LQKI), 436-471 (ENDE…ELGE), and 472-507 (PDAS…GTDW). Ca(2+)-binding residues include aspartate 377, aspartate 379, aspartate 381, lysine 383, glutamate 388, aspartate 413, aspartate 415, asparagine 417, glutamate 424, aspartate 449, aspartate 451, serine 453, tyrosine 455, glutamate 460, aspartate 485, aspartate 487, aspartate 489, arginine 491, and glutamate 496.

It belongs to the protein kinase superfamily. Ser/Thr protein kinase family. CDPK subfamily.

It localises to the membrane. The catalysed reaction is L-seryl-[protein] + ATP = O-phospho-L-seryl-[protein] + ADP + H(+). The enzyme catalyses L-threonyl-[protein] + ATP = O-phospho-L-threonyl-[protein] + ADP + H(+). With respect to regulation, activated by calcium. Autophosphorylation may play an important role in the regulation of the kinase activity. In terms of biological role, may play a role in signal transduction pathways that involve calcium as a second messenger. May be a positive regulator controlling stress signal transduction. The sequence is that of Calcium-dependent protein kinase 10 (CPK10) from Arabidopsis thaliana (Mouse-ear cress).